The primary structure comprises 195 residues: Imidazoleglycerol-phosphate dehydratase (195 aa).

The protein belongs to the imidazoleglycerol-phosphate dehydratase family.

It localises to the cytoplasm. The catalysed reaction is D-erythro-1-(imidazol-4-yl)glycerol 3-phosphate = 3-(imidazol-4-yl)-2-oxopropyl phosphate + H2O. The protein operates within amino-acid biosynthesis; L-histidine biosynthesis; L-histidine from 5-phospho-alpha-D-ribose 1-diphosphate: step 6/9. The polypeptide is Imidazoleglycerol-phosphate dehydratase (Cupriavidus metallidurans (strain ATCC 43123 / DSM 2839 / NBRC 102507 / CH34) (Ralstonia metallidurans)).